Consider the following 176-residue polypeptide: Mitochondrial inner membrane protein Mpv17 (176 aa).

Transmembrane regions (helical) follow at residues 18–38, 57–77, 94–114, and 131–151; these read VQVL…QQLV, LGCG…DHLI, GGFA…LNGM, and LITN…LVPL.

It belongs to the peroxisomal membrane protein PXMP2/4 family.

Its subcellular location is the mitochondrion inner membrane. Its function is as follows. Non-selective channel that modulates the membrane potential under normal conditions and oxidative stress, and is involved in mitochondrial homeostasis. Involved in mitochondrial deoxynucleoside triphosphates (dNTP) pool homeostasis and mitochondrial DNA (mtDNA) maintenance. May be involved in the regulation of reactive oxygen species metabolism and the control of oxidative phosphorylation. In Rattus norvegicus (Rat), this protein is Mitochondrial inner membrane protein Mpv17.